The sequence spans 132 residues: Small ribosomal subunit protein uS8 (132 aa).

This sequence belongs to the universal ribosomal protein uS8 family. In terms of assembly, part of the 30S ribosomal subunit. Contacts proteins S5 and S12.

Functionally, one of the primary rRNA binding proteins, it binds directly to 16S rRNA central domain where it helps coordinate assembly of the platform of the 30S subunit. The sequence is that of Small ribosomal subunit protein uS8 from Nocardia farcinica (strain IFM 10152).